Consider the following 100-residue polypeptide: Urease subunit gamma (100 aa).

The protein belongs to the urease gamma subunit family. As to quaternary structure, heterotrimer of UreA (gamma), UreB (beta) and UreC (alpha) subunits. Three heterotrimers associate to form the active enzyme.

It localises to the cytoplasm. The catalysed reaction is urea + 2 H2O + H(+) = hydrogencarbonate + 2 NH4(+). It functions in the pathway nitrogen metabolism; urea degradation; CO(2) and NH(3) from urea (urease route): step 1/1. The sequence is that of Urease subunit gamma from Thermosynechococcus vestitus (strain NIES-2133 / IAM M-273 / BP-1).